The following is a 210-amino-acid chain: Acyl-homoserine-lactone synthase (210 aa).

The protein belongs to the autoinducer synthase family.

It carries out the reaction a fatty acyl-[ACP] + S-adenosyl-L-methionine = an N-acyl-L-homoserine lactone + S-methyl-5'-thioadenosine + holo-[ACP] + H(+). In terms of biological role, required for the synthesis of OHHL (N-(3-oxohexanoyl)-L-homoserine lactone), an autoinducer molecule which binds to EsaR. OHHL is necessary for biosynthesis of EPS virulence factor (extracellular heteropolysaccharide) which plays a role in the development of Stewart's wilt on sweet corn. In Pantoea stewartii subsp. stewartii (Erwinia stewartii), this protein is Acyl-homoserine-lactone synthase (esaI).